Consider the following 195-residue polypeptide: Xanthine phosphoribosyltransferase (195 aa).

The xanthine site is built by Leu-20 and Asn-27. Residue 128–132 participates in 5-phospho-alpha-D-ribose 1-diphosphate binding; it reads ANGQA. Xanthine is bound at residue Lys-156.

Belongs to the purine/pyrimidine phosphoribosyltransferase family. Xpt subfamily. In terms of assembly, homodimer.

It is found in the cytoplasm. It catalyses the reaction XMP + diphosphate = xanthine + 5-phospho-alpha-D-ribose 1-diphosphate. It participates in purine metabolism; XMP biosynthesis via salvage pathway; XMP from xanthine: step 1/1. In terms of biological role, converts the preformed base xanthine, a product of nucleic acid breakdown, to xanthosine 5'-monophosphate (XMP), so it can be reused for RNA or DNA synthesis. This Latilactobacillus sakei subsp. sakei (strain 23K) (Lactobacillus sakei subsp. sakei) protein is Xanthine phosphoribosyltransferase.